The following is a 566-amino-acid chain: MQPIISFEQFNFQYKHAAQPTVKDITFHIYPGEKVLIAGRSGSGKSTLAHCMNGLIPFSYEGTSTGNILIAGKDPRKKSVFELSKHVGTILQDQDAQFIGLTVEEDVAFYLENECVNQDEMKKIVSESLKKVGMHTFHKQSPHELSGGQKQTVSLAGLLTTNAPMLLFDEPLANLDPASSLHTIELIKNIHKQYNKTIVIIEHRIEEMLNLDLDKIILIDEGEIVAIDTPERILASNILPSIGLREPMYIEGLKRLHFDSNNDVIYPLENLHKESISGVIKEWMEKKAFCKDTPTKKELLKVENLSFSYPNKQKGLENVNLSIYEGEIVALLGHNGAGKSTLAHSLIGINKTKNSRILIDGVNINSWSIRKRGEIIFYVMQNPNHMITQSTVIEEVSFTLKLKKVSKEEIKFRAEEALKICGLYPFRNWPIQALSYGQKKRLTIASVLTANPKLIILDEPTAGQDYYHYKQFMSFIRKLAKKGISFIFITHDMNLALEYADRAIVLHEGRIIANHTASIVLGHPATLQRANLKESSLFKLVKFSGIANPEKFMELYFDDIRREEGV.

ABC transporter domains follow at residues 5–246 (ISFE…GLRE) and 300–533 (LKVE…ANLK). ATP-binding positions include 39–46 (GRSGSGKS) and 333–340 (GHNGAGKS).

This sequence belongs to the ABC transporter superfamily.

It localises to the cell membrane. Functionally, probably part of an ABC transporter complex. Responsible for energy coupling to the transport system. The sequence is that of Putative ABC transporter ATP-binding protein BT9727_2424 from Bacillus thuringiensis subsp. konkukian (strain 97-27).